The following is a 271-amino-acid chain: Pyrroline-5-carboxylate reductase (271 aa).

It belongs to the pyrroline-5-carboxylate reductase family.

It localises to the cytoplasm. It carries out the reaction L-proline + NADP(+) = (S)-1-pyrroline-5-carboxylate + NADPH + 2 H(+). It catalyses the reaction L-proline + NAD(+) = (S)-1-pyrroline-5-carboxylate + NADH + 2 H(+). The protein operates within amino-acid biosynthesis; L-proline biosynthesis; L-proline from L-glutamate 5-semialdehyde: step 1/1. Functionally, catalyzes the reduction of 1-pyrroline-5-carboxylate (PCA) to L-proline. The chain is Pyrroline-5-carboxylate reductase from Staphylococcus aureus (strain COL).